The following is a 475-amino-acid chain: tRNA-2-methylthio-N(6)-dimethylallyladenosine synthase (475 aa).

Basic and acidic residues predominate over residues 1 to 10 (MQETTVKRDG). Residues 1-22 (MQETTVKRDGASPSDAGTPATT) are disordered. An MTTase N-terminal domain is found at 27 to 144 (GKLYIRTFGC…LPDLIKRRRA (118 aa)). The [4Fe-4S] cluster site is built by cysteine 36, cysteine 73, cysteine 107, cysteine 181, cysteine 185, and cysteine 188. One can recognise a Radical SAM core domain in the interval 167–400 (RVDGATAFVS…QALINQQAAA (234 aa)). The 64-residue stretch at 403-466 (QGMIGTRQRV…TNSLRGRVAG (64 aa)) folds into the TRAM domain.

This sequence belongs to the methylthiotransferase family. MiaB subfamily. As to quaternary structure, monomer. The cofactor is [4Fe-4S] cluster.

Its subcellular location is the cytoplasm. The catalysed reaction is N(6)-dimethylallyladenosine(37) in tRNA + (sulfur carrier)-SH + AH2 + 2 S-adenosyl-L-methionine = 2-methylsulfanyl-N(6)-dimethylallyladenosine(37) in tRNA + (sulfur carrier)-H + 5'-deoxyadenosine + L-methionine + A + S-adenosyl-L-homocysteine + 2 H(+). Functionally, catalyzes the methylthiolation of N6-(dimethylallyl)adenosine (i(6)A), leading to the formation of 2-methylthio-N6-(dimethylallyl)adenosine (ms(2)i(6)A) at position 37 in tRNAs that read codons beginning with uridine. In Bordetella parapertussis (strain 12822 / ATCC BAA-587 / NCTC 13253), this protein is tRNA-2-methylthio-N(6)-dimethylallyladenosine synthase.